The following is a 253-amino-acid chain: Amino-acid-binding protein AabA (253 aa).

A signal peptide spans 1–23; it reads MPFLKTLFRGALCSIACGASLFC.

Belongs to the bacterial solute-binding protein 3 family.

The protein localises to the periplasm. The protein is Amino-acid-binding protein AabA (aabA) of Dichelobacter nodosus (Bacteroides nodosus).